The primary structure comprises 316 residues: MIKTELNYGDVYLVPKKTVVDSRKECDTSVQFGPRRFAMPVYPSNMKSVVSAETCELFAREGWFYTLHRFNVDAVAFTRYMQEQGLFASISVGVNDDTYEQLDALKAAGLSPEYMTLDIANAWCVKAERMIKHIKQHFPNTFLIGGNVATAEAARDLEAWGCDAIKAGIAGGRVCITKNKTGFHRPMVSTVRDCVAAVTIPVIADGGIVEHGDIAKALVCGATMVMAGSLFAGYDESAGDIVEIAGKHYKEYFGSASQFNKGAYVNVEGKKILVEYKGSMGKLLRELQEDLQSSVSYAGGTTLAALREVEMIQVYR.

Catalysis depends on Cys175, which acts as the Thioimidate intermediate. 202–225 (VIADGGIVEHGDIAKALVCGATMV) is an NADP(+) binding site.

Belongs to the IMPDH/GMPR family. GuaC type 2 subfamily.

It catalyses the reaction IMP + NH4(+) + NADP(+) = GMP + NADPH + 2 H(+). Functionally, catalyzes the irreversible NADPH-dependent deamination of GMP to IMP. It functions in the conversion of nucleobase, nucleoside and nucleotide derivatives of G to A nucleotides, and in maintaining the intracellular balance of A and G nucleotides. This chain is GMP reductase, found in Chromobacterium violaceum (strain ATCC 12472 / DSM 30191 / JCM 1249 / CCUG 213 / NBRC 12614 / NCIMB 9131 / NCTC 9757 / MK).